A 177-amino-acid polypeptide reads, in one-letter code: Probable chemoreceptor glutamine deamidase CheD (177 aa).

The protein belongs to the CheD family.

The catalysed reaction is L-glutaminyl-[protein] + H2O = L-glutamyl-[protein] + NH4(+). Its function is as follows. Probably deamidates glutamine residues to glutamate on methyl-accepting chemotaxis receptors (MCPs), playing an important role in chemotaxis. The chain is Probable chemoreceptor glutamine deamidase CheD from Pseudomonas syringae pv. syringae (strain B728a).